Here is a 679-residue protein sequence, read N- to C-terminus: Genome polyprotein (679 aa).

A propeptide spans 1–14 (SAGMIIMLIPTVMA) (ER anchor for the capsid protein C, removed in mature form by serine protease NS3). Residues 2–22 (AGMIIMLIPTVMAFHLTTRNG) traverse the membrane as a helical segment. Over 23-138 (EPHMIVSRQE…GAWKHAQRIE (116 aa)) the chain is Extracellular. The N-linked (GlcNAc...) asparagine; by host glycan is linked to Asn83. A helical membrane pass occupies residues 139 to 159 (IWILRHPGFTIMAAILAYTIG). Residues 160-165 (TTHFQR) are Cytoplasmic-facing. A helical transmembrane segment spans residues 166 to 180 (ALIFILLTAVAPSMT). The Extracellular segment spans residues 181–625 (MRCIGISNRD…LHQVFGAIYG (445 aa)). 4 disulfides stabilise this stretch: Cys183–Cys210, Cys240–Cys301, Cys254–Cys285, and Cys272–Cys296. The N-linked (GlcNAc...) asparagine; by host glycan is linked to Asn247. Residues 278–291 (DRGWGNGCGLFGKG) are fusion peptide. An N-linked (GlcNAc...) asparagine; by host glycan is attached at Asn333. 2 disulfide bridges follow: Cys365-Cys465 and Cys482-Cys513. Residues 626–646 (AAFSGVSWTMKILIGVIITWI) form a helical membrane-spanning segment. At 647-652 (GMNSRS) the chain is on the cytoplasmic side. A helical membrane pass occupies residues 653-673 (TSLSVSLVLVGIVTLYLGVMV). Residues 674–679 (QADSGC) are Extracellular-facing.

As to quaternary structure, forms heterodimers with envelope protein E in the endoplasmic reticulum and Golgi. Homodimer; in the endoplasmic reticulum and Golgi. Interacts with protein prM. Interacts with non-structural protein 1. In terms of processing, cleaved in post-Golgi vesicles by a host furin, releasing the mature small envelope protein M, and peptide pr. This cleavage is incomplete as up to 30% of viral particles still carry uncleaved prM. N-glycosylated. Post-translationally, N-glycosylated. The excreted form is glycosylated and this is required for efficient secretion of the protein from infected cells. In terms of processing, specific enzymatic cleavages in vivo yield mature proteins. Cleavages in the lumen of endoplasmic reticulum are performed by host signal peptidase, wereas cleavages in the cytoplasmic side are performed by serine protease NS3. Signal cleavage at the 2K-4B site requires a prior NS3 protease-mediated cleavage at the 4A-2K site.

The protein resides in the secreted. It localises to the virion membrane. Its subcellular location is the host endoplasmic reticulum membrane. Its function is as follows. Prevents premature fusion activity of envelope proteins in trans-Golgi by binding to envelope protein E at pH6.0. After virion release in extracellular space, gets dissociated from E dimers. In terms of biological role, acts as a chaperone for envelope protein E during intracellular virion assembly by masking and inactivating envelope protein E fusion peptide. prM is the only viral peptide matured by host furin in the trans-Golgi network probably to avoid catastrophic activation of the viral fusion activity in acidic Golgi compartment prior to virion release. prM-E cleavage is inefficient, and many virions are only partially matured. These uncleaved prM would play a role in immune evasion. May play a role in virus budding. Exerts cytotoxic effects by activating a mitochondrial apoptotic pathway through M ectodomain. May display a viroporin activity. Functionally, binds to host cell surface receptor and mediates fusion between viral and cellular membranes. Envelope protein is synthesized in the endoplasmic reticulum in the form of heterodimer with protein prM. They play a role in virion budding in the ER, and the newly formed immature particle is covered with 60 spikes composed of heterodimer between precursor prM and envelope protein E. The virion is transported to the Golgi apparatus where the low pH causes dissociation of PrM-E heterodimers and formation of E homodimers. prM-E cleavage is inefficient, and many virions are only partially matured. These uncleaved prM would play a role in immune evasion. Its function is as follows. Involved in immune evasion, pathogenesis and viral replication. Once cleaved off the polyprotein, is targeted to three destinations: the viral replication cycle, the plasma membrane and the extracellular compartment. Essential for viral replication. Required for formation of the replication complex and recruitment of other non-structural proteins to the ER-derived membrane structures. Excreted as a hexameric lipoparticle that plays a role against host immune response. Antagonizing the complement function. Binds to the host macrophages and dendritic cells. Inhibits signal transduction originating from Toll-like receptor 3 (TLR3). In terms of biological role, disrupts the host endothelial glycocalyx layer of host pulmonary microvascular endothelial cells, inducing degradation of sialic acid and shedding of heparan sulfate proteoglycans. NS1 induces expression of sialidases, heparanase, and activates cathepsin L, which activates heparanase via enzymatic cleavage. These effects are probably linked to the endothelial hyperpermeability observed in severe dengue disease. The sequence is that of Genome polyprotein from Dengue virus type 2 (strain Thailand/PUO-218/1980) (DENV-2).